The sequence spans 193 residues: Cytidylate kinase (193 aa).

12 to 20 (GLAGSGTTT) is an ATP binding site.

The protein belongs to the cytidylate kinase family. Type 2 subfamily.

It localises to the cytoplasm. It catalyses the reaction CMP + ATP = CDP + ADP. It carries out the reaction dCMP + ATP = dCDP + ADP. This chain is Cytidylate kinase, found in Thermococcus sibiricus (strain DSM 12597 / MM 739).